A 308-amino-acid polypeptide reads, in one-letter code: MQKVVAIVGPTAVGKTSLAIEIAKKLDGEIVSGDSMQIYKEVAIGTAKASREEQAEVKHYLVDAHSVFEDFSVKNFVDEARSAIGEIAGKGKLPIIAGGTGFYVNALLNDMQLGDKEEEAASVDPEWEVFLAANGPQALWEELNKKDPEAAKKIPVANSRRSLRALSVISRTGGLFSKQQAEIKTRYDYLIIGLNSDREAIYQRINQRVDLMMEAGLLEEARFVYEHRAGEHQVLQAIGYKEFFPYFAGEASLETCVMALKTASRRYAKRQLTYFRNKLPVEWYDPLTDPNCANRIAVRIEEWMKEEK.

9–16 lines the ATP pocket; it reads GPTAVGKT. 11-16 is a substrate binding site; it reads TAVGKT. The interval 34 to 37 is interaction with substrate tRNA; that stretch reads DSMQ.

This sequence belongs to the IPP transferase family. In terms of assembly, monomer. Mg(2+) serves as cofactor.

It carries out the reaction adenosine(37) in tRNA + dimethylallyl diphosphate = N(6)-dimethylallyladenosine(37) in tRNA + diphosphate. In terms of biological role, catalyzes the transfer of a dimethylallyl group onto the adenine at position 37 in tRNAs that read codons beginning with uridine, leading to the formation of N6-(dimethylallyl)adenosine (i(6)A). The polypeptide is tRNA dimethylallyltransferase (Lactobacillus delbrueckii subsp. bulgaricus (strain ATCC 11842 / DSM 20081 / BCRC 10696 / JCM 1002 / NBRC 13953 / NCIMB 11778 / NCTC 12712 / WDCM 00102 / Lb 14)).